A 571-amino-acid polypeptide reads, in one-letter code: NADH-quinone oxidoreductase subunit C/D (571 aa).

Positions 1–171 are NADH dehydrogenase I subunit C; sequence MQASEKTLNE…NLSNTMNYRR (171 aa). The NADH dehydrogenase I subunit D stretch occupies residues 194 to 571; it reads AQVVLNWGPL…LDPVVGEVDR (378 aa).

This sequence in the N-terminal section; belongs to the complex I 30 kDa subunit family. It in the C-terminal section; belongs to the complex I 49 kDa subunit family. As to quaternary structure, NDH-1 is composed of 13 different subunits. Subunits NuoB, CD, E, F, and G constitute the peripheral sector of the complex.

The protein resides in the cell inner membrane. It catalyses the reaction a quinone + NADH + 5 H(+)(in) = a quinol + NAD(+) + 4 H(+)(out). Its function is as follows. NDH-1 shuttles electrons from NADH, via FMN and iron-sulfur (Fe-S) centers, to quinones in the respiratory chain. The immediate electron acceptor for the enzyme in this species is believed to be ubiquinone. Couples the redox reaction to proton translocation (for every two electrons transferred, four hydrogen ions are translocated across the cytoplasmic membrane), and thus conserves the redox energy in a proton gradient. This Hydrogenobaculum sp. (strain Y04AAS1) protein is NADH-quinone oxidoreductase subunit C/D (nuoC).